The sequence spans 346 residues: Fe(3+) ions import ATP-binding protein FbpC 3 (346 aa).

An ABC transporter domain is found at 5–235; that stretch reads LEVDGVDKSF…PIDVATAEFI (231 aa). Residue 37–44 participates in ATP binding; sequence GPSGCGKT.

This sequence belongs to the ABC transporter superfamily. Fe(3+) ion importer (TC 3.A.1.10) family. As to quaternary structure, the complex is composed of two ATP-binding proteins (FbpC), two transmembrane proteins (FbpB) and a solute-binding protein (FbpA).

The protein resides in the cell membrane. It carries out the reaction Fe(3+)(out) + ATP + H2O = Fe(3+)(in) + ADP + phosphate + H(+). In terms of biological role, part of the ABC transporter complex FbpABC involved in Fe(3+) ions import. Responsible for energy coupling to the transport system. This chain is Fe(3+) ions import ATP-binding protein FbpC 3, found in Rhodococcus jostii (strain RHA1).